The chain runs to 190 residues: Large ribosomal subunit protein uL5 (190 aa).

It belongs to the universal ribosomal protein uL5 family. In terms of assembly, part of the 50S ribosomal subunit; part of the 5S rRNA/L5/L18/L25 subcomplex. Contacts the 5S rRNA and the P site tRNA. Forms a bridge to the 30S subunit in the 70S ribosome.

Functionally, this is one of the proteins that bind and probably mediate the attachment of the 5S RNA into the large ribosomal subunit, where it forms part of the central protuberance. In the 70S ribosome it contacts protein S13 of the 30S subunit (bridge B1b), connecting the 2 subunits; this bridge is implicated in subunit movement. Contacts the P site tRNA; the 5S rRNA and some of its associated proteins might help stabilize positioning of ribosome-bound tRNAs. This Blochmanniella floridana protein is Large ribosomal subunit protein uL5.